The sequence spans 693 residues: Elongation factor G (693 aa).

Residues 8–282 (EKTRNIGIMA…AVVDYLPSPL (275 aa)) form the tr-type G domain. Residues 17–24 (AHVDAGKT), 81–85 (DTPGH), and 135–138 (NKMD) contribute to the GTP site.

The protein belongs to the TRAFAC class translation factor GTPase superfamily. Classic translation factor GTPase family. EF-G/EF-2 subfamily.

The protein localises to the cytoplasm. In terms of biological role, catalyzes the GTP-dependent ribosomal translocation step during translation elongation. During this step, the ribosome changes from the pre-translocational (PRE) to the post-translocational (POST) state as the newly formed A-site-bound peptidyl-tRNA and P-site-bound deacylated tRNA move to the P and E sites, respectively. Catalyzes the coordinated movement of the two tRNA molecules, the mRNA and conformational changes in the ribosome. In Streptococcus mutans serotype c (strain ATCC 700610 / UA159), this protein is Elongation factor G.